The primary structure comprises 206 residues: LexA repressor (206 aa).

The segment at residues 27-47 is a DNA-binding region (H-T-H motif); sequence YEEIRQNLGFRSLNAVFKHLK. Residues S120 and K157 each act as for autocatalytic cleavage activity in the active site.

The protein belongs to the peptidase S24 family. As to quaternary structure, homodimer.

The enzyme catalyses Hydrolysis of Ala-|-Gly bond in repressor LexA.. Its function is as follows. Represses a number of genes involved in the response to DNA damage (SOS response), including recA and lexA. In the presence of single-stranded DNA, RecA interacts with LexA causing an autocatalytic cleavage which disrupts the DNA-binding part of LexA, leading to derepression of the SOS regulon and eventually DNA repair. The chain is LexA repressor from Syntrophobacter fumaroxidans (strain DSM 10017 / MPOB).